Consider the following 367-residue polypeptide: Aspartate beta-hydroxylase domain-containing protein 1 (367 aa).

Residues 1-27 form a disordered region; it reads MWRGSSAGGSQGAAMEGTGGELGGQGN. At 1 to 49 the chain is on the cytoplasmic side; it reads MWRGSSAGGSQGAAMEGTGGELGGQGNWGLEDAPGLLARASLPIMPAWP. Residues 50–72 form a helical membrane-spanning segment; it reads LPLASSALTLLLGALTSLFLWYC. Over 73–367 the chain is Lumenal; sequence YRLGSQDMQA…ALDFVFAPDP (295 aa). A disordered region spans residues 88 to 122; the sequence is RAGAVGGRPGGCSEAGRPSPGRSGESGEGPRTEGL. Serine 106 bears the Phosphoserine mark.

Belongs to the aspartyl/asparaginyl beta-hydroxylase family.

The protein localises to the membrane. This chain is Aspartate beta-hydroxylase domain-containing protein 1 (ASPHD1), found in Bos taurus (Bovine).